A 486-amino-acid polypeptide reads, in one-letter code: Ribulose bisphosphate carboxylase large chain 1 (486 aa).

Substrate-binding residues include asparagine 125 and threonine 175. Lysine 177 (proton acceptor) is an active-site residue. Residue lysine 179 coordinates substrate. 3 residues coordinate Mg(2+): lysine 203, aspartate 205, and glutamate 206. Lysine 203 carries the N6-carboxylysine modification. The active-site Proton acceptor is the histidine 295. Residues arginine 296, histidine 328, and serine 380 each coordinate substrate.

Belongs to the RuBisCO large chain family. Type I subfamily. In terms of assembly, heterohexadecamer of 8 large chains and 8 small chains. Mg(2+) serves as cofactor.

The enzyme catalyses 2 (2R)-3-phosphoglycerate + 2 H(+) = D-ribulose 1,5-bisphosphate + CO2 + H2O. The catalysed reaction is D-ribulose 1,5-bisphosphate + O2 = 2-phosphoglycolate + (2R)-3-phosphoglycerate + 2 H(+). RuBisCO catalyzes two reactions: the carboxylation of D-ribulose 1,5-bisphosphate, the primary event in carbon dioxide fixation, as well as the oxidative fragmentation of the pentose substrate. Both reactions occur simultaneously and in competition at the same active site. The protein is Ribulose bisphosphate carboxylase large chain 1 of Bradyrhizobium sp. (strain ORS 278).